The primary structure comprises 415 residues: Camphor 5-monooxygenase (415 aa).

Cys358 is a binding site for heme.

It belongs to the cytochrome P450 family. The cofactor is heme.

It is found in the cytoplasm. The enzyme catalyses 2 reduced [2Fe-2S]-[putidaredoxin] + (1R,4R)-camphor + O2 + 2 H(+) = (1R,4R,5R)-5-hydroxycamphor + 2 oxidized [2Fe-2S]-[putidaredoxin] + H2O. Its pathway is terpene metabolism; (R)-camphor degradation. Its function is as follows. Involved in a camphor oxidation system. The chain is Camphor 5-monooxygenase (camC) from Pseudomonas putida (Arthrobacter siderocapsulatus).